Consider the following 255-residue polypeptide: Testis-specific H1 histone (255 aa).

Residues 1–54 (MEQALTGEAQSRWPRRGGSGAMAEAPGPSGESRGHSATQLPAEKTVGGPSRGCS) are disordered. Phosphoserine is present on S56. The segment covering 124-134 (KVPKPRRKPGR) has biased composition (basic residues). Residues 124–255 (KVPKPRRKPG…PKKPAQRTIQ (132 aa)) are disordered. Residues 142 to 152 (RAPWRTPAAPR) are compositionally biased toward low complexity. Basic residues-rich tracts occupy residues 153 to 166 (SSRR…KAAR) and 174 to 194 (RNAR…RARP). Basic and acidic residues-rich tracts occupy residues 195–230 (RAKE…PRSG) and 238–248 (KPREEKQEPKK).

This sequence belongs to the histone H1/H5 family. In terms of tissue distribution, testis-specific.

The protein resides in the nucleus. It is found in the chromosome. Its function is as follows. Essential for normal spermatogenesis and male fertility. Required for proper cell restructuring and DNA condensation during the elongation phase of spermiogenesis. Involved in the histone-protamine transition of sperm chromatin and the subsequent production of functional sperm. Binds both double-stranded and single-stranded DNA, ATP and protamine-1. In Homo sapiens (Human), this protein is Testis-specific H1 histone.